The following is a 418-amino-acid chain: Cyclin-A1 (418 aa).

This sequence belongs to the cyclin family. Cyclin AB subfamily. Interacts with the CDK1 and the CDK2 protein kinases to form a serine/threonine kinase holoenzyme complex. The cyclin subunit imparts substrate specificity to the complex.

The protein resides in the nucleus. In terms of biological role, may be involved in the control of the cell cycle at the G1/S (start) and G2/M (mitosis) transitions. The protein is Cyclin-A1 (ccna1) of Xenopus laevis (African clawed frog).